A 792-amino-acid polypeptide reads, in one-letter code: Phosphatidylinositol 4-phosphate 5-kinase type-1 sktl (792 aa).

Positions 1-21 (MDTRVELELEPVGKQDRLKDQ) are enriched in basic and acidic residues. Disordered stretches follow at residues 1-74 (MDTR…QPGT), 105-139 (TQTP…KKLG), 423-446 (AKLQ…DAPE), 577-612 (TPTF…PTNA), and 640-714 (AAST…TDLS). 2 stretches are compositionally biased toward polar residues: residues 52-62 (QTASPDQEATP) and 105-131 (TQTP…STTG). The 419-residue stretch at 155-573 (QSKQIMGSIQ…RFQDAMGKQV (419 aa)) folds into the PIPK domain. Positions 642-658 (STSSLQQQRSSNQSNNN) are enriched in low complexity. Positions 678–702 (EPSSTYHTQYSYDSSGRTGSALTSD) are enriched in polar residues.

Interacts with ash2 (via B30.2/SPRY domain); the interaction is direct and seems to be specific for ash2 isoform B.

The protein localises to the cytoplasm. It localises to the cell cortex. The protein resides in the nucleus. Its subcellular location is the chromosome. It is found in the apical cell membrane. The protein localises to the cell projection. It localises to the cilium. The protein resides in the flagellum membrane. The catalysed reaction is a 1,2-diacyl-sn-glycero-3-phospho-(1D-myo-inositol 4-phosphate) + ATP = a 1,2-diacyl-sn-glycero-3-phospho-(1D-myo-inositol-4,5-bisphosphate) + ADP + H(+). Functionally, catalyzes the phosphorylation of phosphatidylinositol 4-phosphate (PtdIns[4]P) to form phosphatidylinositol 4,5-bisphosphate (PtdIns[4,5]P(2)), a lipid second messenger that regulates several cellular processes such as signal transduction, vesicle trafficking, actin cytoskeleton dynamics, cell adhesion, and cell motility. PtdIns[4,5]P(2) can directly act as a second messenger or can be utilized as a precursor to generate other second messengers: inositol 1,4,5-trisphosphate (IP3), diacylglycerol (DAG) or phosphatidylinositol-3,4,5-trisphosphate (PtdIns[3,4,5]P(3)). Required for germline development during oogenesis. Sktl is the major phosphatidylinositol 4-phosphate 5-kinase responsible for enrichment of PtdIns[4,5]P(2) in the apical plasma membrane of the oocyte and follicular epithelium cells of the egg chamber during oogenesis. Involved in nuclear anchoring and microtubule organization required for targeted mRNA transport during maintenance of oocyte polarity. The PtdIns[4,5]P(2) produced by sktl is required for maintenance of cellular polarity, prevention of the epithelial-mesenchymal transition process, maintenance of adherens junctions and regulation of apical constriction, probably by affecting polarized cortical recruitment of PAR proteins and their effectors, including baz/bazooka, aPKC, par-1 and l(2)gl. Involved in actin cytoskeleton organization probably through PtdIns[4,5]P(2)-mediated regulation of Moe/Moesin phosphorylation. Involved in PtdIns[4,5]P(2)-mediated apical recruitment of the formin dia/diaphanous in tubular epithelial cells. Involved in anterodorsal cell morphogenesis and eggshell dorsal appendage formation, probably through regulation of apical constriction by PtdIns[4,5]P(2) during tubulogenesis. Required for cell viability or proliferation during wing and eye imaginal disk development. May be involved in cytoskeletal regulation during sensory bristle development. Together with mys/integrin beta localizes to the trailing edge of larval epidermal cells in a JNK signaling-dependent manner during wound healing and is required for setting up cell polarity and re-epithelialization. Required for polarization of elongating spermatid cysts possibly by generation of PtdIns[4,5]P(2) involved in mediating membrane association and orientation of the nucleus-basal body pair. Probably involved in PtdIns[4,5]P(2)-mediated recruitment of exocyst proteins that may mediate membrane addition during spermatid elongation. Involved in maintenance of specialised cell contacts known as slit diaphragms required for nephrocyte morphogenesis and function. Regulates nephrocyte endocytosis, possibly through PtdIns[4,5]P(2)-mediated recruitment of effector proteins. Not required for nervous system development or neurotransmitter release at the neuromuscular junction. Together with ash2 probably plays a role in maintenance of transcriptionally active chromatin through down-regulation of histone H1 hyperphosphorylation. This is Phosphatidylinositol 4-phosphate 5-kinase type-1 sktl from Drosophila melanogaster (Fruit fly).